The primary structure comprises 248 residues: uncharacterized protein (248 aa).

9-33 (IITGASSGIGEATAILLAEKGAKLV) contributes to the NADP(+) binding site. Ser-141 is a binding site for substrate. Tyr-154 (proton acceptor) is an active-site residue.

Belongs to the short-chain dehydrogenases/reductases (SDR) family.

This is an uncharacterized protein from Listeria innocua serovar 6a (strain ATCC BAA-680 / CLIP 11262).